A 70-amino-acid polypeptide reads, in one-letter code: ATP synthase subunit c (70 aa).

The next 2 helical transmembrane spans lie at 5–25 (AAGIAAGLAAVGGAIAVAIIV) and 47–67 (FIGVPLAEAVPIIAIVVSFIL).

Belongs to the ATPase C chain family. In terms of assembly, F-type ATPases have 2 components, F(1) - the catalytic core - and F(0) - the membrane proton channel. F(1) has five subunits: alpha(3), beta(3), gamma(1), delta(1), epsilon(1). F(0) has three main subunits: a(1), b(2) and c(10-14). The alpha and beta chains form an alternating ring which encloses part of the gamma chain. F(1) is attached to F(0) by a central stalk formed by the gamma and epsilon chains, while a peripheral stalk is formed by the delta and b chains.

The protein localises to the cell membrane. Its function is as follows. F(1)F(0) ATP synthase produces ATP from ADP in the presence of a proton or sodium gradient. F-type ATPases consist of two structural domains, F(1) containing the extramembraneous catalytic core and F(0) containing the membrane proton channel, linked together by a central stalk and a peripheral stalk. During catalysis, ATP synthesis in the catalytic domain of F(1) is coupled via a rotary mechanism of the central stalk subunits to proton translocation. Key component of the F(0) channel; it plays a direct role in translocation across the membrane. A homomeric c-ring of between 10-14 subunits forms the central stalk rotor element with the F(1) delta and epsilon subunits. This is ATP synthase subunit c from Halalkalibacterium halodurans (strain ATCC BAA-125 / DSM 18197 / FERM 7344 / JCM 9153 / C-125) (Bacillus halodurans).